Consider the following 68-residue polypeptide: Neuronal regeneration-related protein (68 aa).

Residues Met21 to Ser54 are disordered. Residues Thr44 to Ser54 show a composition bias toward polar residues.

As to quaternary structure, interacts with the latency-associated peptides (LAP) of TGFB1 and TGFB2; the interaction results in a decrease in TGFB autoinduction. Interacts with FLNA. Post-translationally, phosphorylated on Ser-59. Phosphorylation decreases stability and activity.

The protein resides in the cytoplasm. In terms of biological role, may have roles in neural function and cellular differentiation. Ectopic expression promotes axonal regeneration, induces differentiation of fibroblast into myofibroblast, induces myofibroblast ameboid migration, augments motility of gliomas, and increases retinoic-acid regulation of lipid-droplet biogenesis. Down-regulates the expression of TGFB1 and TGFB2 but not of TGFB3. May play a role in the regulation of alveolar generation. This chain is Neuronal regeneration-related protein (NREP), found in Macaca fascicularis (Crab-eating macaque).